The sequence spans 113 residues: Mini zinc finger protein 2 (113 aa).

The ZF-HD dimerization-type; degenerate zinc finger occupies 24 to 83 (YGECRRNHAASTGGHAVDGCREFIAAEDGGGGNSTSAVGVAAAALKCAACGCHRSFHRRV). A disordered region spans residues 93-113 (DCASGDTSSSSPSSSSSLSSE). Positions 100–113 (SSSSPSSSSSLSSE) are enriched in low complexity.

In terms of assembly, homo- and heterodimers.

The protein localises to the cytoplasm. In terms of biological role, inhibits zinc finger homeodomain (ZHD) transcription factors, by interacting with them to prevent both their nuclear localization and their DNA-binding properties. This is Mini zinc finger protein 2 (MIF3) from Oryza sativa subsp. japonica (Rice).